Here is a 342-residue protein sequence, read N- to C-terminus: Transmembrane protein 268 (342 aa).

The segment at 1–30 (MACEPQVDPGATGPLPPSSPGWSALPGGSP) is disordered. 2 helical membrane passes run 105-125 (AFAV…SQMF) and 132-152 (AGML…VLVF).

As to quaternary structure, interacts with ITGAM; this interaction inhibits ITGAM degradation via the endosome-lysosome pathway. Interacts with ITGB4; this interaction prevents ITGB4 degradation.

Its subcellular location is the cell membrane. Functionally, stabilizes cell surface expression of ITGAM and participates in the adhesion and migration of phagocytes during bacterial clearance. In Homo sapiens (Human), this protein is Transmembrane protein 268.